Reading from the N-terminus, the 124-residue chain is MPFKRLIKSIDIGRAAESQAEKFARAQGFTIVERNFRCKGGEIDLIARHGEHLVFIEVRHRSSDKFGSAAESITQKKQQRIILAANIYLQKKGLTNMPCRFDVIVGNLKSNTGFQWIPDAFSCW.

The protein belongs to the UPF0102 family.

The protein is UPF0102 protein HCH_05895 of Hahella chejuensis (strain KCTC 2396).